The chain runs to 421 residues: Ig-like V-type domain-containing protein FAM187A (421 aa).

Residues 1–18 (MNLAHTTVLLWAWGSLQA) form the signal peptide. Residues 19 to 377 (FEIVEKENIF…VSFSDPETRA (359 aa)) lie on the Extracellular side of the membrane. Residues 268–362 (PWLPQVPIQF…IAGFRLGVTS (95 aa)) form the Ig-like V-type domain. A disulfide bond links Cys-290 and Cys-346. Asn-318 is a glycosylation site (N-linked (GlcNAc...) asparagine). A helical transmembrane segment spans residues 378–398 (ALGLILIGYMLITVIFISIHL). Residues 399-421 (CRCCCYLFRFCPNFSPRLSRPQL) lie on the Cytoplasmic side of the membrane.

Belongs to the FAM187 family.

It is found in the membrane. The protein is Ig-like V-type domain-containing protein FAM187A (FAM187A) of Bos taurus (Bovine).